Consider the following 904-residue polypeptide: Serine/arginine repetitive matrix protein 1 (904 aa).

N-acetylmethionine is present on methionine 1. The tract at residues 1–151 is necessary for DNA and RNA-binding; it reads MDAGFFRGTS…ASMKKQDEDK (151 aa). Positions 1–156 are necessary for mRNA 3'-end cleavage and cytoplasmic accumulation; sequence MDAGFFRGTS…QDEDKDKRDK (156 aa). Citrulline is present on arginine 7. The 100-residue stretch at 27-126 folds into the PWI domain; sequence QLKFAECLEK…AGIPSAFLEL (100 aa). A Glycyl lysine isopeptide (Lys-Gly) (interchain with G-Cter in SUMO2) cross-link involves residue lysine 127. The span at 139-170 shows a compositional bias: basic and acidic residues; it reads EKLASMKKQDEDKDKRDKEEKESSREKRERSR. The tract at residues 139–904 is disordered; the sequence is EKLASMKKQD…MRKAQVSPQS (766 aa). Residue lysine 140 is modified to N6-acetyllysine. The span at 171 to 207 shows a compositional bias: basic residues; it reads SPRRRKSRSPSPRRRSSPVRRERKRSHSRSPRHRTKS. Over residues 214-234 the composition is skewed to basic and acidic residues; that stretch reads PEKKEKTPELPEPSVKVKEPS. Threonine 220 bears the Phosphothreonine mark. Position 227 is a phosphoserine (serine 227). A Glycyl lysine isopeptide (Lys-Gly) (interchain with G-Cter in SUMO1); alternate cross-link involves residue lysine 231. Lysine 231 participates in a covalent cross-link: Glycyl lysine isopeptide (Lys-Gly) (interchain with G-Cter in SUMO2); alternate. A phosphoserine mark is found at serine 234 and serine 240. Position 241 is a phosphothreonine (threonine 241). The segment covering 246-275 has biased composition (basic and acidic residues); that stretch reads KVPKPEPIPEPKEPSPEKNSKKEKEKEKTR. Lysine 249 is covalently cross-linked (Glycyl lysine isopeptide (Lys-Gly) (interchain with G-Cter in SUMO2)). A Phosphoserine modification is found at serine 260. 2 stretches are compositionally biased toward basic residues: residues 276–329 and 336–351; these read PRSR…RTPP and PRHR…RRRS. The tract at residues 300–688 is necessary for speckles and matrix localization; the sequence is RRHRSRSRSY…NKRHSPSPRP (389 aa). Low complexity predominate over residues 352–368; it reads SASLSGSSSSSSSSRSR. Residues serine 389, serine 391, serine 393, and serine 402 each carry the phosphoserine modification. At threonine 406 the chain carries Phosphothreonine. A Phosphoserine modification is found at serine 414. Phosphothreonine is present on threonine 416. Phosphoserine occurs at positions 420, 429, 431, and 436. The span at 428–438 shows a compositional bias: polar residues; the sequence is VSVSPGRTSGK. Residue lysine 447 forms a Glycyl lysine isopeptide (Lys-Gly) (interchain with G-Cter in SUMO2) linkage. 2 positions are modified to phosphoserine: serine 450 and serine 452. A Glycyl lysine isopeptide (Lys-Gly) (interchain with G-Cter in SUMO2) cross-link involves residue lysine 459. A phosphoserine mark is found at serine 463 and serine 465. Lysine 472 is covalently cross-linked (Glycyl lysine isopeptide (Lys-Gly) (interchain with G-Cter in SUMO2)). At serine 478 the chain carries Phosphoserine. A compositionally biased stretch (low complexity) spans 478–501; that stretch reads SVQQRRQYRRQNQQSSSDSGSSSS. The segment covering 503 to 518 has biased composition (basic and acidic residues); that stretch reads EDERPKRSHVKNGEVG. A phosphoserine mark is found at serine 524, serine 526, serine 528, serine 530, serine 532, serine 549, and serine 551. Positions 533–560 are enriched in basic residues; that stretch reads PRKRQKETSPRGRRRRSPSPPPTRRRRS. Residue threonine 555 is modified to Phosphothreonine. Serine 560 and serine 562 each carry phosphoserine. The span at 567 to 592 shows a compositional bias: basic residues; that stretch reads PRRRRTPTPPPRRRTPSPPPRRRSPS. A phosphothreonine mark is found at threonine 572, threonine 574, and threonine 581. A Phosphoserine modification is found at serine 583. Positions 593–605 are enriched in low complexity; the sequence is PRRYSPPIQRRYS. Tyrosine 596 carries the post-translational modification Phosphotyrosine. 3 positions are modified to phosphoserine: serine 597, serine 605, and serine 607. Threonine 614 bears the Phosphothreonine mark. Serine 616, serine 626, serine 628, serine 636, and serine 638 each carry phosphoserine. A compositionally biased stretch (basic residues) spans 621-636; that stretch reads PKRRASPSPPPKRRVS. A compositionally biased stretch (basic residues) spans 649–663; sequence TKRRSPSLSSKHRKG. Phosphoserine occurs at positions 694, 695, 696, 705, 707, 713, and 715. 2 stretches are compositionally biased toward low complexity: residues 701 to 719 and 736 to 759; these read RRGA…PSTR and AASP…SPEP. Threonine 718 carries the post-translational modification Phosphothreonine. A phosphoserine mark is found at serine 738, serine 740, serine 748, serine 752, serine 754, serine 756, serine 769, serine 773, serine 775, and serine 777. A compositionally biased stretch (low complexity) spans 771-786; that stretch reads VQSQSPSTNWSPAVPV. At threonine 778 the chain carries Phosphothreonine. Residues serine 781 and serine 791 each carry the phosphoserine modification. Threonine 793 carries the phosphothreonine modification. Phosphoserine occurs at positions 795, 797, and 802. A compositionally biased stretch (basic residues) spans 809-834; that stretch reads KKKKKKKDKKHKKDKKHKKHKKHKKE. Positions 837-866 are enriched in low complexity; the sequence is VAAAAAAAVTPAAIAAATTTLAQEEPVAAP. Lysine 869 participates in a covalent cross-link: Glycyl lysine isopeptide (Lys-Gly) (interchain with G-Cter in SUMO2). Threonine 872 is subject to Phosphothreonine. Position 874 is a phosphoserine (serine 874). Positions 882 to 892 are enriched in basic and acidic residues; the sequence is DLEKHLREKAL. Serine 901 is subject to Phosphoserine.

This sequence belongs to the splicing factor SR family. Identified in the spliceosome C complex. Found in a pre-mRNA splicing complex with SFRS4, SFRS5, SNRP70, SNRPA1, SRRM1 and SRRM2. Found in a pre-mRNA exonic splicing enhancer (ESE) complex with SNRP70, SNRPA1, SRRM1 and TRA2B/SFRS10. Component of the minor spliceosome, which splices U12-type introns. Found in a mRNA splicing-dependent exon junction complex (EJC) with DEK, PRPF8, NCBP1, RBM8A, RNPS1, SRRM1 and ALYREF/THOC4. Interacts with DDX39B, CPSF1, RBM8A, RNPS1, and ALYREF/THOC4. Seems to be a compound of RNA export complexes that are released from speckles in a ATP-dependent manner. Phosphorylated on multiple serine and threonine residues by DYRK3 during the G2-to-M transition, after the nuclear-envelope breakdown. Phosphorylation by DYRK3 promotes disassembly of nuclear speckles. Post-translationally, citrullinated by PADI4.

The protein localises to the nucleus matrix. Its subcellular location is the nucleus speckle. In terms of biological role, part of pre- and post-splicing multiprotein mRNP complexes. As a component of the minor spliceosome, involved in the splicing of U12-type introns in pre-mRNAs. Involved in numerous pre-mRNA processing events. Promotes constitutive and exonic splicing enhancer (ESE)-dependent splicing activation by bridging together sequence-specific (SR family proteins, SFRS4, SFRS5 and TRA2B/SFRS10) and basal snRNP (SNRP70 and SNRPA1) factors of the spliceosome. Stimulates mRNA 3'-end cleavage independently of the formation of an exon junction complex. Binds both pre-mRNA and spliced mRNA 20-25 nt upstream of exon-exon junctions. Binds RNA and DNA with low sequence specificity and has similar preference for either double- or single-stranded nucleic acid substrates. This chain is Serine/arginine repetitive matrix protein 1 (SRRM1), found in Homo sapiens (Human).